The primary structure comprises 548 residues: Membrane protein insertase YidC (548 aa).

Residues 6–26 (NLFLIAFLFVSFMIWQAWQTD) traverse the membrane as a helical segment. A disordered region spans residues 30–53 (QPLQTQTTQNTTSAAGDAVNQGVP). A run of 4 helical transmembrane segments spans residues 345–365 (KFLH…TFIV), 420–440 (LGGC…YYML), 458–478 (LAAQ…MFFI), and 499–519 (PVIF…YYIV).

It belongs to the OXA1/ALB3/YidC family. Type 1 subfamily. Interacts with the Sec translocase complex via SecD. Specifically interacts with transmembrane segments of nascent integral membrane proteins during membrane integration.

Its subcellular location is the cell inner membrane. Functionally, required for the insertion and/or proper folding and/or complex formation of integral membrane proteins into the membrane. Involved in integration of membrane proteins that insert both dependently and independently of the Sec translocase complex, as well as at least some lipoproteins. Aids folding of multispanning membrane proteins. This Erwinia tasmaniensis (strain DSM 17950 / CFBP 7177 / CIP 109463 / NCPPB 4357 / Et1/99) protein is Membrane protein insertase YidC.